A 330-amino-acid chain; its full sequence is MKKSFIHQQEEISFVKNTFTQYLIAKLDVVEVQGPILSRVGDGMQDNLSGTENPVSVNVLKIPNATFEVVHSLAKWKRHTLARFGFNEGEGLVVNMKALRPDEDSLDQTHSVYVDQWDWEKVIPDGKRNLAYLKEAVETIYKVIRLTELAVEARYDIEAVLPKKITFIHTEELVAKYPDLTPKERENAITKEFGAVFLIGIGGVLPDGKPHDGRAPDYDDWTTETENGYHGLNGDILVWNGQLGSAFELSSMGIRVDEEALKRQVEMTGDQDRLAFDWHKSLLNGLFPLTIGGGIGQSRMVMFLLRKQHIGEVQTSVWPQEVRDSYDNIL.

This sequence belongs to the class-II aminoacyl-tRNA synthetase family. AsnA subfamily.

The protein resides in the cytoplasm. It carries out the reaction L-aspartate + NH4(+) + ATP = L-asparagine + AMP + diphosphate + H(+). The protein operates within amino-acid biosynthesis; L-asparagine biosynthesis; L-asparagine from L-aspartate (ammonia route): step 1/1. This Streptococcus pyogenes serotype M49 (strain NZ131) protein is Aspartate--ammonia ligase.